The chain runs to 250 residues: Large ribosomal subunit protein uL30B (250 aa).

Belongs to the universal ribosomal protein uL30 family. In terms of assembly, component of the large ribosomal subunit (LSU). Mature yeast ribosomes consist of a small (40S) and a large (60S) subunit. The 40S small subunit contains 1 molecule of ribosomal RNA (18S rRNA) and at least 33 different proteins. The large 60S subunit contains 3 rRNA molecules (25S, 5.8S and 5S rRNA) and at least 46 different proteins.

It is found in the cytoplasm. It localises to the nucleus. The protein resides in the nucleolus. Component of the ribosome, a large ribonucleoprotein complex responsible for the synthesis of proteins in the cell. The small ribosomal subunit (SSU) binds messenger RNAs (mRNAs) and translates the encoded message by selecting cognate aminoacyl-transfer RNA (tRNA) molecules. The large subunit (LSU) contains the ribosomal catalytic site termed the peptidyl transferase center (PTC), which catalyzes the formation of peptide bonds, thereby polymerizing the amino acids delivered by tRNAs into a polypeptide chain. The nascent polypeptides leave the ribosome through a tunnel in the LSU and interact with protein factors that function in enzymatic processing, targeting, and the membrane insertion of nascent chains at the exit of the ribosomal tunnel. The chain is Large ribosomal subunit protein uL30B (rpl702) from Schizosaccharomyces pombe (strain 972 / ATCC 24843) (Fission yeast).